The chain runs to 241 residues: Uridylate kinase (241 aa).

Residue 15 to 18 (KLSG) participates in ATP binding. Residues 23–28 (GAEGFG) form an involved in allosteric activation by GTP region. G57 serves as a coordination point for UMP. ATP-binding residues include G58 and R62. Residues D77 and 138–145 (TGNPFFTT) each bind UMP. ATP contacts are provided by T165, F171, and D174.

The protein belongs to the UMP kinase family. Homohexamer.

Its subcellular location is the cytoplasm. It catalyses the reaction UMP + ATP = UDP + ADP. Its pathway is pyrimidine metabolism; CTP biosynthesis via de novo pathway; UDP from UMP (UMPK route): step 1/1. Its activity is regulated as follows. Allosterically activated by GTP. Inhibited by UTP. In terms of biological role, catalyzes the reversible phosphorylation of UMP to UDP. The sequence is that of Uridylate kinase from Sodalis glossinidius (strain morsitans).